A 210-amino-acid chain; its full sequence is Oligoribonuclease (210 aa).

In terms of domain architecture, Exonuclease spans Leu-12–Leu-177. Tyr-134 is a catalytic residue.

The protein belongs to the oligoribonuclease family.

It is found in the cytoplasm. Its function is as follows. 3'-to-5' exoribonuclease specific for small oligoribonucleotides. This is Oligoribonuclease from Corynebacterium diphtheriae (strain ATCC 700971 / NCTC 13129 / Biotype gravis).